A 693-amino-acid chain; its full sequence is Glycine--tRNA ligase beta subunit (693 aa).

Belongs to the class-II aminoacyl-tRNA synthetase family. Tetramer of two alpha and two beta subunits.

The protein localises to the cytoplasm. It carries out the reaction tRNA(Gly) + glycine + ATP = glycyl-tRNA(Gly) + AMP + diphosphate. In Vibrio campbellii (strain ATCC BAA-1116), this protein is Glycine--tRNA ligase beta subunit.